A 29-amino-acid chain; its full sequence is Conotoxin pr6a (29 aa).

Cystine bridges form between cysteine 2–cysteine 20, cysteine 9–cysteine 24, and cysteine 19–cysteine 28.

In terms of tissue distribution, expressed by the venom duct.

It is found in the secreted. Intraperitoneal injection into fish (1 nmol) provokes hyperactivity and erratic swimming in various directions after 14 minutes. The chain is Conotoxin pr6a from Conus parius (Cone snail).